The sequence spans 382 residues: Alkanesulfonate monooxygenase (382 aa).

This sequence belongs to the SsuD family. In terms of assembly, homotetramer.

The catalysed reaction is an alkanesulfonate + FMNH2 + O2 = an aldehyde + FMN + sulfite + H2O + 2 H(+). In terms of biological role, catalyzes the desulfonation of aliphatic sulfonates. The chain is Alkanesulfonate monooxygenase from Yersinia pseudotuberculosis serotype IB (strain PB1/+).